Here is a 616-residue protein sequence, read N- to C-terminus: Chaperone protein HscA (616 aa).

This sequence belongs to the heat shock protein 70 family.

Functionally, chaperone involved in the maturation of iron-sulfur cluster-containing proteins. Has a low intrinsic ATPase activity which is markedly stimulated by HscB. Involved in the maturation of IscU. This Serratia proteamaculans (strain 568) protein is Chaperone protein HscA.